The sequence spans 291 residues: MKRILLFVLTNVAVVAVLGIVASLLGVNRYLTASGLDLGSLLGFALVIGFGGAIISLLISKPMAKWTTGVRIISQPQNVDEAWIVETVRKLADTAGIGMPEVGIFDGAPNAFATGAFKNSALVAVSTGLLQGMTREEIEAVIGHEVAHVANGDMVTMALIQGVMNTFVVFLSRVIAFAIDGFLRKGDERSSGPGIGYMITTVVLDIVLGFAAAIVVAWFSRHREFRADAGAAKLMNRKQPMINALARLGGMTPGELPKSMAAMGIAGGIGKLFSTHPPIEERIAALQNAPL.

The next 2 membrane-spanning stretches (helical) occupy residues 4–24 (ILLF…VASL) and 39–59 (GSLL…SLLI). His-144 serves as a coordination point for Zn(2+). The active site involves Glu-145. Zn(2+) is bound at residue His-148. The next 2 membrane-spanning stretches (helical) occupy residues 159-179 (LIQG…AFAI) and 199-219 (ITTV…VAWF). Glu-224 is a binding site for Zn(2+).

This sequence belongs to the peptidase M48B family. Zn(2+) is required as a cofactor.

The protein resides in the cell inner membrane. The polypeptide is Protease HtpX homolog (Albidiferax ferrireducens (strain ATCC BAA-621 / DSM 15236 / T118) (Rhodoferax ferrireducens)).